A 1016-amino-acid chain; its full sequence is Mastermind-like protein 1 (1016 aa).

The required for interaction with NOTCH proteins stretch occupies residues 1–123 (MVLPTCPMAE…NLDSATSPQN (123 aa)). Position 45 is a phosphoserine (S45). Disordered regions lie at residues 65–184 (QAKA…LGLD), 263–487 (PDED…PSHV), 561–617 (KPKP…SQQQ), 658–681 (EKQQ…QGSF), and 796–953 (AYGQ…GGRA). Residues 67–76 (KAKRAGKHRQ) show a composition bias toward basic residues. The segment covering 93-115 (DAADGPEHGRPATHLHDTVKRNL) has biased composition (basic and acidic residues). Polar residues predominate over residues 116-129 (DSATSPQNGDQQNG). Phosphoserine is present on S120. A compositionally biased stretch (basic and acidic residues) spans 263–282 (PDEDMKDLFNEDFEEKKDPE). Polar residues predominate over residues 283-292 (SSGSATQTPL). Phosphoserine is present on residues S303 and S314. Residues 322–353 (AGQTFLGPSSAPVSTDSPSLGGSQTLFHTSGQ) are compositionally biased toward polar residues. S360 carries the phosphoserine modification. Residues 392-403 (ELSSAHQLQQIA) are compositionally biased toward polar residues. Positions 413 to 426 (QNPQQATPAPAPGQ) are enriched in low complexity. Composition is skewed to polar residues over residues 427 to 439 (MSTW…SHSS), 451 to 463 (SPSS…TNSK), 577 to 595 (QEQN…SVGT), and 602 to 617 (VASS…SQQQ). The segment covering 801–810 (SLGSSGLSQQ) has biased composition (low complexity). An N6-acetyllysine modification is found at K822. Over residues 834-885 (GQNSSWQHQGMPNLSGQTPGNSNVSPFTAASSFHMQQQAHLKMSSPQFSQAV) the composition is skewed to polar residues. A Phosphoserine modification is found at S1015.

Belongs to the mastermind family. In terms of assembly, interacts (via N-terminus) with NOTCH1, NOTCH2, NOTCH3 and NOTCH4 (via ankyrin repeat region). Interacts (via N-terminus) with p53 (via DNA-binding region). Forms a DNA-binding complex with Notch proteins and RBPSUH/RBP-J kappa/CBF1. Also binds CREBBP/CBP and CDK8. Forms a complex with PRAG1, NOTCH1 and MAML1, in a MAML1-dependent manner. As to expression, widely expressed with highest levels in heart, pancreas, peripheral blood leukocytes and spleen.

The protein localises to the nucleus speckle. Acts as a transcriptional coactivator for NOTCH proteins. Has been shown to amplify NOTCH-induced transcription of HES1. Enhances phosphorylation and proteolytic turnover of the NOTCH intracellular domain in the nucleus through interaction with CDK8. Binds to CREBBP/CBP which promotes nucleosome acetylation at NOTCH enhancers and activates transcription. Induces phosphorylation and localization of CREBBP to nuclear foci. Plays a role in hematopoietic development by regulating NOTCH-mediated lymphoid cell fate decisions. This chain is Mastermind-like protein 1, found in Homo sapiens (Human).